The following is a 249-amino-acid chain: Type III pantothenate kinase (249 aa).

6-13 (DCGNSFIK) lines the ATP pocket. Substrate contacts are provided by residues tyrosine 93 and 100-103 (GMDR). The active-site Proton acceptor is the aspartate 102. Aspartate 122 serves as a coordination point for K(+). An ATP-binding site is contributed by threonine 125. Threonine 181 lines the substrate pocket.

It belongs to the type III pantothenate kinase family. Homodimer. The cofactor is NH4(+). K(+) serves as cofactor.

Its subcellular location is the cytoplasm. The catalysed reaction is (R)-pantothenate + ATP = (R)-4'-phosphopantothenate + ADP + H(+). It functions in the pathway cofactor biosynthesis; coenzyme A biosynthesis; CoA from (R)-pantothenate: step 1/5. Its function is as follows. Catalyzes the phosphorylation of pantothenate (Pan), the first step in CoA biosynthesis. The polypeptide is Type III pantothenate kinase (Pseudomonas putida (strain W619)).